Here is a 286-residue protein sequence, read N- to C-terminus: MAENTMWHETLHDQFGQYFAVDNVLYHEKTDHQDLIIFENAAFGRVMALDGVVQTTERDEFIYHEMMTHVPLLAHGHAKHVLIIGGGDGAMLREVTRHKNVETITMVEIDAGVVSFCRQYLPNHNAGSYDDPRFTLVIDDGVNFVNQTHQTFDVIISDCTDPIGPGESLFTSAFYEGCKRCLNPGGIFVAQNGVCFLQQDEALDSHRKLSHYFSDVGFYQAAIPTYYGGIMTFAWATDNDALRHLSSEIIQARFHAAGLKCRYYNPAIHVAAFALPQYLHDALSAQ.

The 234-residue stretch at 5–238 folds into the PABS domain; it reads TMWHETLHDQ…GIMTFAWATD (234 aa). Q33 serves as a coordination point for S-methyl-5'-thioadenosine. 2 residues coordinate spermidine: H64 and D88. Residues E108 and 140–141 each bind S-methyl-5'-thioadenosine; that span reads DG. D158 serves as the catalytic Proton acceptor. 158–161 is a binding site for spermidine; the sequence is DCTD. P165 serves as a coordination point for S-methyl-5'-thioadenosine.

It belongs to the spermidine/spermine synthase family. In terms of assembly, homodimer or homotetramer.

Its subcellular location is the cytoplasm. The enzyme catalyses S-adenosyl 3-(methylsulfanyl)propylamine + putrescine = S-methyl-5'-thioadenosine + spermidine + H(+). The protein operates within amine and polyamine biosynthesis; spermidine biosynthesis; spermidine from putrescine: step 1/1. Catalyzes the irreversible transfer of a propylamine group from the amino donor S-adenosylmethioninamine (decarboxy-AdoMet) to putrescine (1,4-diaminobutane) to yield spermidine. The polypeptide is Polyamine aminopropyltransferase (Salmonella schwarzengrund (strain CVM19633)).